A 215-amino-acid polypeptide reads, in one-letter code: Pyrrolidone-carboxylate peptidase (215 aa).

Catalysis depends on residues E80, C143, and H167.

It belongs to the peptidase C15 family. Homotetramer.

It localises to the cytoplasm. The enzyme catalyses Release of an N-terminal pyroglutamyl group from a polypeptide, the second amino acid generally not being Pro.. Its function is as follows. Removes 5-oxoproline from various penultimate amino acid residues except L-proline. This Bacillus cereus (strain 03BB102) protein is Pyrrolidone-carboxylate peptidase.